Consider the following 825-residue polypeptide: Quinic acid utilization activator (825 aa).

The span at 1–12 shows a compositional bias: polar residues; the sequence is MSSDTRQTSGGN. The tract at residues 1 to 45 is disordered; the sequence is MSSDTRQTSGGNARSKRRLTDAVDEDGRPTATAEDPTSNPKRQRV. A compositionally biased stretch (basic and acidic residues) spans 18–28; that stretch reads RLTDAVDEDGR. The segment at residues 49–76 is a DNA-binding region (zn(2)-C6 fungal-type); sequence CDSCRSKKDKCDGAQPICSTCASLSRPC. 3 disordered regions span residues 160–186, 204–224, and 658–683; these read EQPEGDQERSARGEIDSPADAEESSVL, QSPLASGPSPVRLPRPSTTRL, and GSQRRPRHATQQGTHPRSPMAISLPG. Residues 165 to 174 show a composition bias toward basic and acidic residues; the sequence is DQERSARGEI. Residues 658 to 672 are compositionally biased toward polar residues; that stretch reads GSQRRPRHATQQGTH.

It localises to the nucleus. Its function is as follows. Transcription activation of genes for enzymes and proteins of quinate metabolism by binding to a 16 base-pair sequence (consensus 5'-GGATAANNNNTTATCC-3') in front of each qut gene. This is Quinic acid utilization activator (qutA) from Emericella nidulans (strain FGSC A4 / ATCC 38163 / CBS 112.46 / NRRL 194 / M139) (Aspergillus nidulans).